Consider the following 364-residue polypeptide: UDP-N-acetylglucosamine--N-acetylmuramyl-(pentapeptide) pyrophosphoryl-undecaprenol N-acetylglucosamine transferase (364 aa).

Residues 10–12, Asn124, Arg165, Ser193, Ile248, and Gln293 each bind UDP-N-acetyl-alpha-D-glucosamine; that span reads TGG.

Belongs to the glycosyltransferase 28 family. MurG subfamily.

The protein resides in the cell inner membrane. The catalysed reaction is di-trans,octa-cis-undecaprenyl diphospho-N-acetyl-alpha-D-muramoyl-L-alanyl-D-glutamyl-meso-2,6-diaminopimeloyl-D-alanyl-D-alanine + UDP-N-acetyl-alpha-D-glucosamine = di-trans,octa-cis-undecaprenyl diphospho-[N-acetyl-alpha-D-glucosaminyl-(1-&gt;4)]-N-acetyl-alpha-D-muramoyl-L-alanyl-D-glutamyl-meso-2,6-diaminopimeloyl-D-alanyl-D-alanine + UDP + H(+). Its pathway is cell wall biogenesis; peptidoglycan biosynthesis. Its function is as follows. Cell wall formation. Catalyzes the transfer of a GlcNAc subunit on undecaprenyl-pyrophosphoryl-MurNAc-pentapeptide (lipid intermediate I) to form undecaprenyl-pyrophosphoryl-MurNAc-(pentapeptide)GlcNAc (lipid intermediate II). In Geobacter sulfurreducens (strain ATCC 51573 / DSM 12127 / PCA), this protein is UDP-N-acetylglucosamine--N-acetylmuramyl-(pentapeptide) pyrophosphoryl-undecaprenol N-acetylglucosamine transferase.